A 378-amino-acid polypeptide reads, in one-letter code: Heme chaperone HemW (378 aa).

Positions 1–237 (MVKLPPLSLY…LTAAGYQQYE (237 aa)) constitute a Radical SAM core domain. Residue Tyr-10 coordinates S-adenosyl-L-methionine. [4Fe-4S] cluster-binding residues include Cys-16, Cys-20, and Cys-23. S-adenosyl-L-methionine is bound by residues Gly-66, 67-68 (GT), Glu-99, Gln-126, Arg-138, and Asp-163.

This sequence belongs to the anaerobic coproporphyrinogen-III oxidase family. HemW subfamily. As to quaternary structure, binding of the [4Fe-4S] cofactor promotes dimerization. [4Fe-4S] cluster serves as cofactor.

It localises to the cytoplasm. Probably acts as a heme chaperone, transferring heme to the NarI subunit of the respiratory enzyme nitrate reductase; transfer may be stimulated by NADH. Binds one molecule of heme per monomer, possibly covalently. Heme binding is not affected by either [4Fe-4S] or S-adenosyl-L-methionine (SAM)-binding. Does not have coproporphyrinogen III dehydrogenase activity in vitro. Binds 1 [4Fe-4S] cluster. The cluster is coordinated with 3 cysteines and an exchangeable S-adenosyl-L-methionine. This Escherichia coli (strain K12) protein is Heme chaperone HemW.